The sequence spans 172 residues: Ribosome maturation factor RimM (172 aa).

The 73-residue stretch at 96 to 168 folds into the PRC barrel domain; the sequence is EGEFYYHQII…RVDVELMEGL (73 aa).

Belongs to the RimM family. Binds ribosomal protein uS19.

Its subcellular location is the cytoplasm. In terms of biological role, an accessory protein needed during the final step in the assembly of 30S ribosomal subunit, possibly for assembly of the head region. Essential for efficient processing of 16S rRNA. May be needed both before and after RbfA during the maturation of 16S rRNA. It has affinity for free ribosomal 30S subunits but not for 70S ribosomes. This is Ribosome maturation factor RimM from Streptococcus pyogenes serotype M28 (strain MGAS6180).